The chain runs to 295 residues: MSKQVGSDRVKRGMAEMQKGGVIMDVVNAEQAKIAEEAGAVAVMALERVPSDIRAAGGVARACNPKIVQEVMDAVSIPVMAKCRIGHITEARVLESMGVDYIDESEVLTPADEEYHLLKSDYTVPFVCGCRNLGEAARRIGEGAAMLRTKGEPGTGNIVEAVRHMRQVNSEVAKLTVMPDDEIMTFAKEIGAPYEVLKSIKDNGRLPVVNFAAGGVATPQDAALMMQLGADGVFVGSGIFKSEDPEKFAKAIVQATTHYTDYELIGKLAQELGEAMRGLDVNQLSLEERMQERGW.

D25 is a binding site for D-ribose 5-phosphate. Residue K82 is the Schiff-base intermediate with D-ribose 5-phosphate of the active site. G154 provides a ligand contact to D-ribose 5-phosphate. Residue R166 coordinates D-glyceraldehyde 3-phosphate. Residues G215 and 236 to 237 each bind D-ribose 5-phosphate; that span reads GS.

This sequence belongs to the PdxS/SNZ family. As to quaternary structure, in the presence of PdxT, forms a dodecamer of heterodimers.

The catalysed reaction is aldehydo-D-ribose 5-phosphate + D-glyceraldehyde 3-phosphate + L-glutamine = pyridoxal 5'-phosphate + L-glutamate + phosphate + 3 H2O + H(+). The protein operates within cofactor biosynthesis; pyridoxal 5'-phosphate biosynthesis. In terms of biological role, catalyzes the formation of pyridoxal 5'-phosphate from ribose 5-phosphate (RBP), glyceraldehyde 3-phosphate (G3P) and ammonia. The ammonia is provided by the PdxT subunit. Can also use ribulose 5-phosphate and dihydroxyacetone phosphate as substrates, resulting from enzyme-catalyzed isomerization of RBP and G3P, respectively. The protein is Pyridoxal 5'-phosphate synthase subunit PdxS of Staphylococcus carnosus (strain TM300).